The sequence spans 313 residues: Methionyl-tRNA formyltransferase (313 aa).

(6S)-5,6,7,8-tetrahydrofolate is bound at residue 113 to 116 (SLLP).

Belongs to the Fmt family.

The catalysed reaction is L-methionyl-tRNA(fMet) + (6R)-10-formyltetrahydrofolate = N-formyl-L-methionyl-tRNA(fMet) + (6S)-5,6,7,8-tetrahydrofolate + H(+). In terms of biological role, attaches a formyl group to the free amino group of methionyl-tRNA(fMet). The formyl group appears to play a dual role in the initiator identity of N-formylmethionyl-tRNA by promoting its recognition by IF2 and preventing the misappropriation of this tRNA by the elongation apparatus. The polypeptide is Methionyl-tRNA formyltransferase (Francisella tularensis subsp. tularensis (strain FSC 198)).